An 87-amino-acid polypeptide reads, in one-letter code: Beta-toxin Cn5 (87 aa).

An N-terminal signal peptide occupies residues 1-19 (MNSLLMITACLFLIGTVWA). Residues 20–85 (KEGYLVNKST…TYPLPNKSCS (66 aa)) enclose the LCN-type CS-alpha/beta domain. Intrachain disulfides connect Cys31-Cys84, Cys35-Cys60, Cys44-Cys65, and Cys48-Cys67.

Belongs to the long (4 C-C) scorpion toxin superfamily. Sodium channel inhibitor family. Beta subfamily. As to expression, expressed by the venom gland.

Its subcellular location is the secreted. Its function is as follows. Beta toxins bind voltage-independently at site-4 of sodium channels (Nav) and shift the voltage of activation toward more negative potentials thereby affecting sodium channel activation and promoting spontaneous and repetitive firing. This toxin is lethal to crustaceans (freshwater crayfish (Cambarellus montezumae spp.)), it provokes a reversible paralysis to insects (crickets (Achaeta spp.)), but is not toxic to mice. At high concentrations, it does displace the (beta) mammal-specific toxin Cn2 from rat brain synaptosomes. The sequence is that of Beta-toxin Cn5 from Centruroides noxius (Mexican scorpion).